We begin with the raw amino-acid sequence, 429 residues long: Enolase (429 aa).

A (2R)-2-phosphoglycerate-binding site is contributed by glutamine 162. Glutamate 204 (proton donor) is an active-site residue. 3 residues coordinate Mg(2+): aspartate 241, glutamate 288, and aspartate 315. Lysine 340, arginine 369, serine 370, and lysine 391 together coordinate (2R)-2-phosphoglycerate. The active-site Proton acceptor is lysine 340.

It belongs to the enolase family. The cofactor is Mg(2+).

Its subcellular location is the cytoplasm. It is found in the secreted. It localises to the cell surface. It carries out the reaction (2R)-2-phosphoglycerate = phosphoenolpyruvate + H2O. The protein operates within carbohydrate degradation; glycolysis; pyruvate from D-glyceraldehyde 3-phosphate: step 4/5. Functionally, catalyzes the reversible conversion of 2-phosphoglycerate (2-PG) into phosphoenolpyruvate (PEP). It is essential for the degradation of carbohydrates via glycolysis. The chain is Enolase from Christiangramia forsetii (strain DSM 17595 / CGMCC 1.15422 / KT0803) (Gramella forsetii).